Reading from the N-terminus, the 194-residue chain is Peptidyl-tRNA hydrolase (194 aa).

Y17 provides a ligand contact to tRNA. H22 acts as the Proton acceptor in catalysis. 3 residues coordinate tRNA: Y68, N70, and N115.

It belongs to the PTH family. As to quaternary structure, monomer.

It localises to the cytoplasm. The catalysed reaction is an N-acyl-L-alpha-aminoacyl-tRNA + H2O = an N-acyl-L-amino acid + a tRNA + H(+). Its function is as follows. Hydrolyzes ribosome-free peptidyl-tRNAs (with 1 or more amino acids incorporated), which drop off the ribosome during protein synthesis, or as a result of ribosome stalling. Catalyzes the release of premature peptidyl moieties from peptidyl-tRNA molecules trapped in stalled 50S ribosomal subunits, and thus maintains levels of free tRNAs and 50S ribosomes. In Pseudoalteromonas atlantica (strain T6c / ATCC BAA-1087), this protein is Peptidyl-tRNA hydrolase.